Reading from the N-terminus, the 416-residue chain is UDP-N-acetylglucosamine 1-carboxyvinyltransferase (416 aa).

Lys-22–Asn-23 is a phosphoenolpyruvate binding site. Arg-92 is a binding site for UDP-N-acetyl-alpha-D-glucosamine. Cys-116 acts as the Proton donor in catalysis. Position 116 is a 2-(S-cysteinyl)pyruvic acid O-phosphothioketal (Cys-116). 2 residues coordinate UDP-N-acetyl-alpha-D-glucosamine: Asp-304 and Ile-326.

This sequence belongs to the EPSP synthase family. MurA subfamily.

It is found in the cytoplasm. The catalysed reaction is phosphoenolpyruvate + UDP-N-acetyl-alpha-D-glucosamine = UDP-N-acetyl-3-O-(1-carboxyvinyl)-alpha-D-glucosamine + phosphate. It functions in the pathway cell wall biogenesis; peptidoglycan biosynthesis. Functionally, cell wall formation. Adds enolpyruvyl to UDP-N-acetylglucosamine. This is UDP-N-acetylglucosamine 1-carboxyvinyltransferase from Solidesulfovibrio magneticus (strain ATCC 700980 / DSM 13731 / RS-1) (Desulfovibrio magneticus).